We begin with the raw amino-acid sequence, 113 residues long: Mini zinc finger protein 2 (113 aa).

The ZF-HD dimerization-type; degenerate zinc finger occupies 24 to 83 (YGECRRNHAASTGGHAVDGCREFIAAEDGGGGNSTSAVGVAAAALKCAACGCHRSFHRRV). The tract at residues 93–113 (DCASGDTSSSSPSSSSSLSSE) is disordered. Low complexity predominate over residues 100-113 (SSSSPSSSSSLSSE).

In terms of assembly, homo- and heterodimers.

It localises to the cytoplasm. Its function is as follows. Inhibits zinc finger homeodomain (ZHD) transcription factors, by interacting with them to prevent both their nuclear localization and their DNA-binding properties. This is Mini zinc finger protein 2 (MIF3) from Oryza sativa subsp. japonica (Rice).